The primary structure comprises 142 residues: Hemoglobin subunit alpha (142 aa).

The Globin domain occupies 2 to 142 (VLSPADKTNV…VSTVLTSKYR (141 aa)). Phosphoserine is present on Ser-4. Lys-8 carries the N6-succinyllysine modification. Thr-9 is subject to Phosphothreonine. At Lys-12 the chain carries N6-succinyllysine. Position 17 is an N6-acetyllysine; alternate (Lys-17). Lys-17 bears the N6-succinyllysine; alternate mark. Tyr-25 is modified (phosphotyrosine). Position 36 is a phosphoserine (Ser-36). N6-succinyllysine is present on Lys-41. Phosphoserine is present on Ser-50. His-59 contacts O2. His-88 is a heme b binding site. At Ser-103 the chain carries Phosphoserine. At Thr-109 the chain carries Phosphothreonine. Phosphoserine is present on residues Ser-125 and Ser-132. Phosphothreonine occurs at positions 135 and 138. Position 139 is a phosphoserine (Ser-139).

The protein belongs to the globin family. Heterotetramer of two alpha chains and two beta chains. Red blood cells.

Functionally, involved in oxygen transport from the lung to the various peripheral tissues. In terms of biological role, hemopressin acts as an antagonist peptide of the cannabinoid receptor CNR1. Hemopressin-binding efficiently blocks cannabinoid receptor CNR1 and subsequent signaling. This chain is Hemoglobin subunit alpha (HBA), found in Piliocolobus badius (Western red colobus).